Consider the following 390-residue polypeptide: GTPase Obg (390 aa).

One can recognise an Obg domain in the interval 1–159; that stretch reads MKFVDEAAIL…RELMLELLLL (159 aa). The OBG-type G domain maps to 160 to 333; it reads ADVGMLGLPN…LCWDVMSFLN (174 aa). GTP is bound by residues 166 to 173, 191 to 195, 213 to 216, 283 to 286, and 314 to 316; these read GLPNAGKS, FTTLI, DIPG, NKID, and SAA. 2 residues coordinate Mg(2+): S173 and T193. Over residues 364-384 the composition is skewed to acidic residues; that stretch reads VEAEAEDDWDDDWDEEDDDGV. The tract at residues 364–390 is disordered; it reads VEAEAEDDWDDDWDEEDDDGVEIIYER.

It belongs to the TRAFAC class OBG-HflX-like GTPase superfamily. OBG GTPase family. In terms of assembly, monomer. Mg(2+) is required as a cofactor.

The protein resides in the cytoplasm. Its function is as follows. An essential GTPase which binds GTP, GDP and possibly (p)ppGpp with moderate affinity, with high nucleotide exchange rates and a fairly low GTP hydrolysis rate. Plays a role in control of the cell cycle, stress response, ribosome biogenesis and in those bacteria that undergo differentiation, in morphogenesis control. The sequence is that of GTPase Obg from Yersinia pestis.